The primary structure comprises 596 residues: Aspartate--tRNA(Asp/Asn) ligase (596 aa).

Glutamate 175 contributes to the L-aspartate binding site. The segment at glutamine 199–lysine 202 is aspartate. Residues arginine 221 and histidine 454 each contribute to the L-aspartate site. Arginine 221–glutamate 223 lines the ATP pocket. Glutamate 488 provides a ligand contact to ATP. Arginine 495 provides a ligand contact to L-aspartate. Glycine 540–arginine 543 is an ATP binding site.

This sequence belongs to the class-II aminoacyl-tRNA synthetase family. Type 1 subfamily. In terms of assembly, homodimer.

The protein localises to the cytoplasm. It carries out the reaction tRNA(Asx) + L-aspartate + ATP = L-aspartyl-tRNA(Asx) + AMP + diphosphate. In terms of biological role, aspartyl-tRNA synthetase with relaxed tRNA specificity since it is able to aspartylate not only its cognate tRNA(Asp) but also tRNA(Asn). Reaction proceeds in two steps: L-aspartate is first activated by ATP to form Asp-AMP and then transferred to the acceptor end of tRNA(Asp/Asn). This chain is Aspartate--tRNA(Asp/Asn) ligase, found in Bartonella henselae (strain ATCC 49882 / DSM 28221 / CCUG 30454 / Houston 1) (Rochalimaea henselae).